The following is a 450-amino-acid chain: Putative cysteine--tRNA ligase 2 (450 aa).

The 'HIGH' region motif lies at isoleucine 29 to histidine 39. The 'KMSKS' region signature appears at lysine 270–serine 274. Lysine 273 contacts ATP. A disordered region spans residues proline 372–glutamine 392.

This sequence belongs to the class-I aminoacyl-tRNA synthetase family. In terms of assembly, monomer.

The protein localises to the cytoplasm. It catalyses the reaction tRNA(Cys) + L-cysteine + ATP = L-cysteinyl-tRNA(Cys) + AMP + diphosphate. The sequence is that of Putative cysteine--tRNA ligase 2 (cysS2) from Tropheryma whipplei (strain TW08/27) (Whipple's bacillus).